The sequence spans 513 residues: GMP synthase [glutamine-hydrolyzing] (513 aa).

One can recognise a Glutamine amidotransferase type-1 domain in the interval Leu-9–Gln-198. Cys-86 serves as the catalytic Nucleophile. Active-site residues include His-172 and Glu-174. One can recognise a GMPS ATP-PPase domain in the interval Trp-199–Arg-388. ATP is bound at residue Ser-226–Ser-232.

In terms of assembly, homodimer.

The catalysed reaction is XMP + L-glutamine + ATP + H2O = GMP + L-glutamate + AMP + diphosphate + 2 H(+). It functions in the pathway purine metabolism; GMP biosynthesis; GMP from XMP (L-Gln route): step 1/1. Its function is as follows. Catalyzes the synthesis of GMP from XMP. The polypeptide is GMP synthase [glutamine-hydrolyzing] (Staphylococcus aureus (strain Mu3 / ATCC 700698)).